A 493-amino-acid chain; its full sequence is Putative BTB/POZ domain-containing protein L35 (493 aa).

The BTB domain maps to 16–87 (TDLKLTLVDD…YLVDNKSEVD (72 aa)).

This sequence belongs to the mimivirus BTB/WD family.

In Acanthamoeba polyphaga (Amoeba), this protein is Putative BTB/POZ domain-containing protein L35.